Consider the following 194-residue polypeptide: Mersacidin decarboxylase (194 aa).

The active site involves His-75.

It belongs to the HFCD (homooligomeric flavin containing Cys decarboxylase) superfamily. As to quaternary structure, homododecamer. Requires FAD as cofactor.

It participates in antibiotic biosynthesis; mersacidin biosynthesis. Its function is as follows. Catalyzes the oxidative decarboxylation of the C-terminal cysteine residue of mersacidin to an aminoenethiol residue. The protein is Mersacidin decarboxylase (mrsD) of Bacillus sp. (strain HIL-Y85/54728).